The chain runs to 235 residues: uncharacterized protein (235 aa).

This is an uncharacterized protein from Escherichia coli (strain K12).